The sequence spans 231 residues: 2-C-methyl-D-erythritol 4-phosphate cytidylyltransferase (231 aa).

The protein belongs to the IspD/TarI cytidylyltransferase family. IspD subfamily.

The enzyme catalyses 2-C-methyl-D-erythritol 4-phosphate + CTP + H(+) = 4-CDP-2-C-methyl-D-erythritol + diphosphate. Its pathway is isoprenoid biosynthesis; isopentenyl diphosphate biosynthesis via DXP pathway; isopentenyl diphosphate from 1-deoxy-D-xylulose 5-phosphate: step 2/6. Functionally, catalyzes the formation of 4-diphosphocytidyl-2-C-methyl-D-erythritol from CTP and 2-C-methyl-D-erythritol 4-phosphate (MEP). The protein is 2-C-methyl-D-erythritol 4-phosphate cytidylyltransferase of Clostridium novyi (strain NT).